We begin with the raw amino-acid sequence, 288 residues long: Oxaloacetate decarboxylase (288 aa).

Residue Ser47 coordinates substrate. Position 85 (Asp85) interacts with Mg(2+). Substrate-binding residues include Arg156 and His232.

The protein belongs to the isocitrate lyase/PEP mutase superfamily. Oxaloacetate decarboxylase family. In terms of assembly, homotetramer; dimer of dimers. Mg(2+) is required as a cofactor.

The catalysed reaction is oxaloacetate + H(+) = pyruvate + CO2. In terms of biological role, catalyzes the decarboxylation of oxaloacetate into pyruvate. Seems to play a role in maintaining cellular concentrations of bicarbonate and pyruvate. The sequence is that of Oxaloacetate decarboxylase from Bradyrhizobium diazoefficiens (strain JCM 10833 / BCRC 13528 / IAM 13628 / NBRC 14792 / USDA 110).